A 230-amino-acid polypeptide reads, in one-letter code: Ion-translocating oxidoreductase complex subunit E (230 aa).

A run of 6 helical transmembrane segments spans residues 18–38, 39–59, 63–83, 86–106, 125–145, and 182–202; these read ALVQ…ATNA, LGLG…VSAL, TPAE…VSAV, LINA…PLIV, WLSA…MFVL, and PFLL…MLAV.

It belongs to the NqrDE/RnfAE family. In terms of assembly, the complex is composed of six subunits: RsxA, RsxB, RsxC, RsxD, RsxE and RsxG.

It is found in the cell inner membrane. In terms of biological role, part of a membrane-bound complex that couples electron transfer with translocation of ions across the membrane. Required to maintain the reduced state of SoxR. The protein is Ion-translocating oxidoreductase complex subunit E of Salmonella dublin (strain CT_02021853).